The sequence spans 409 residues: UDP-N-acetylglucosamine--N-acetylmuramyl-(pentapeptide) pyrophosphoryl-undecaprenol N-acetylglucosamine transferase (409 aa).

UDP-N-acetyl-alpha-D-glucosamine-binding positions include 11–13 (TGG), asparagine 125, arginine 169, serine 199, and glutamine 299.

The protein belongs to the glycosyltransferase 28 family. MurG subfamily.

The protein resides in the cell membrane. It catalyses the reaction di-trans,octa-cis-undecaprenyl diphospho-N-acetyl-alpha-D-muramoyl-L-alanyl-D-glutamyl-meso-2,6-diaminopimeloyl-D-alanyl-D-alanine + UDP-N-acetyl-alpha-D-glucosamine = di-trans,octa-cis-undecaprenyl diphospho-[N-acetyl-alpha-D-glucosaminyl-(1-&gt;4)]-N-acetyl-alpha-D-muramoyl-L-alanyl-D-glutamyl-meso-2,6-diaminopimeloyl-D-alanyl-D-alanine + UDP + H(+). It functions in the pathway cell wall biogenesis; peptidoglycan biosynthesis. Its function is as follows. Cell wall formation. Catalyzes the transfer of a GlcNAc subunit on undecaprenyl-pyrophosphoryl-MurNAc-pentapeptide (lipid intermediate I) to form undecaprenyl-pyrophosphoryl-MurNAc-(pentapeptide)GlcNAc (lipid intermediate II). The protein is UDP-N-acetylglucosamine--N-acetylmuramyl-(pentapeptide) pyrophosphoryl-undecaprenol N-acetylglucosamine transferase of Clostridioides difficile (strain 630) (Peptoclostridium difficile).